Reading from the N-terminus, the 126-residue chain is Large ribosomal subunit protein bL12 (126 aa).

It belongs to the bacterial ribosomal protein bL12 family. Homodimer. Part of the ribosomal stalk of the 50S ribosomal subunit. Forms a multimeric L10(L12)X complex, where L10 forms an elongated spine to which 2 to 4 L12 dimers bind in a sequential fashion. Binds GTP-bound translation factors.

In terms of biological role, forms part of the ribosomal stalk which helps the ribosome interact with GTP-bound translation factors. Is thus essential for accurate translation. This chain is Large ribosomal subunit protein bL12, found in Chlorobium phaeobacteroides (strain BS1).